Reading from the N-terminus, the 331-residue chain is Pantothenate kinase (331 aa).

Gly109 to Ser116 is an ATP binding site.

This sequence belongs to the prokaryotic pantothenate kinase family.

The protein localises to the cytoplasm. It catalyses the reaction (R)-pantothenate + ATP = (R)-4'-phosphopantothenate + ADP + H(+). Its pathway is cofactor biosynthesis; coenzyme A biosynthesis; CoA from (R)-pantothenate: step 1/5. This Rhizobium meliloti (strain 1021) (Ensifer meliloti) protein is Pantothenate kinase.